Reading from the N-terminus, the 273-residue chain is Zinc finger protein 80 (273 aa).

7 consecutive C2H2-type zinc fingers follow at residues 49-71, 77-99, 103-127, 133-155, 161-183, 189-211, and 217-239; these read YKCK…QQIH, YECQ…VRIH, KPCK…HQIH, YECS…RMTH, FGCK…MKIH, YKCS…SMTH, and YECK…TRSH.

The protein belongs to the krueppel C2H2-type zinc-finger protein family.

Its subcellular location is the nucleus. May be involved in transcriptional regulation. The sequence is that of Zinc finger protein 80 (ZNF80) from Pongo pygmaeus (Bornean orangutan).